We begin with the raw amino-acid sequence, 156 residues long: Small ribosomal subunit protein uS7 (156 aa).

The protein belongs to the universal ribosomal protein uS7 family. As to quaternary structure, part of the 30S ribosomal subunit. Contacts proteins S9 and S11.

In terms of biological role, one of the primary rRNA binding proteins, it binds directly to 16S rRNA where it nucleates assembly of the head domain of the 30S subunit. Is located at the subunit interface close to the decoding center, probably blocks exit of the E-site tRNA. The sequence is that of Small ribosomal subunit protein uS7 from Vibrio cholerae serotype O1 (strain ATCC 39315 / El Tor Inaba N16961).